The primary structure comprises 239 residues: Ureidoacrylate amidohydrolase RutB (239 aa).

Asp35 serves as the catalytic Proton acceptor. Lys144 is an active-site residue. Residue Cys177 is the Nucleophile of the active site.

This sequence belongs to the isochorismatase family. RutB subfamily.

The catalysed reaction is (Z)-3-ureidoacrylate + H2O + H(+) = (Z)-3-aminoacrylate + NH4(+) + CO2. It catalyses the reaction (Z)-3-ureidoacrylate + H2O = (Z)-3-aminoacrylate + carbamate + H(+). The enzyme catalyses (Z)-2-methylureidoacrylate + H2O + H(+) = (Z)-2-methylaminoacrylate + NH4(+) + CO2. Hydrolyzes ureidoacrylate to form aminoacrylate and carbamate. The carbamate hydrolyzes spontaneously, thereby releasing one of the nitrogen atoms of the pyrimidine ring as ammonia and one of its carbon atoms as CO2. This is Ureidoacrylate amidohydrolase RutB from Caulobacter segnis (strain ATCC 21756 / DSM 7131 / JCM 7823 / NBRC 15250 / LMG 17158 / TK0059) (Mycoplana segnis).